The primary structure comprises 439 residues: Trigger factor (439 aa).

Residues 165–250 (GDFAKFDFEG…LHEIQELKLP (86 aa)) enclose the PPIase FKBP-type domain.

Belongs to the FKBP-type PPIase family. Tig subfamily.

The protein resides in the cytoplasm. The enzyme catalyses [protein]-peptidylproline (omega=180) = [protein]-peptidylproline (omega=0). Its function is as follows. Involved in protein export. Acts as a chaperone by maintaining the newly synthesized protein in an open conformation. Functions as a peptidyl-prolyl cis-trans isomerase. The sequence is that of Trigger factor from Campylobacter lari (strain RM2100 / D67 / ATCC BAA-1060).